The primary structure comprises 603 residues: Proline--tRNA ligase (603 aa).

The protein belongs to the class-II aminoacyl-tRNA synthetase family. ProS type 1 subfamily. As to quaternary structure, homodimer.

It localises to the cytoplasm. It carries out the reaction tRNA(Pro) + L-proline + ATP = L-prolyl-tRNA(Pro) + AMP + diphosphate. Catalyzes the attachment of proline to tRNA(Pro) in a two-step reaction: proline is first activated by ATP to form Pro-AMP and then transferred to the acceptor end of tRNA(Pro). As ProRS can inadvertently accommodate and process non-cognate amino acids such as alanine and cysteine, to avoid such errors it has two additional distinct editing activities against alanine. One activity is designated as 'pretransfer' editing and involves the tRNA(Pro)-independent hydrolysis of activated Ala-AMP. The other activity is designated 'posttransfer' editing and involves deacylation of mischarged Ala-tRNA(Pro). The misacylated Cys-tRNA(Pro) is not edited by ProRS. This Microcystis aeruginosa (strain NIES-843 / IAM M-2473) protein is Proline--tRNA ligase.